The chain runs to 84 residues: RNA-binding protein Hfq (84 aa).

One can recognise a Sm domain in the interval 10–70 (DLFLNVLRRD…ISTIMPFRPV (61 aa)).

This sequence belongs to the Hfq family. As to quaternary structure, homohexamer.

Functionally, RNA chaperone that binds small regulatory RNA (sRNAs) and mRNAs to facilitate mRNA translational regulation in response to envelope stress, environmental stress and changes in metabolite concentrations. Also binds with high specificity to tRNAs. This chain is RNA-binding protein Hfq, found in Moorella thermoacetica (strain ATCC 39073 / JCM 9320).